The primary structure comprises 533 residues: uncharacterized protein (533 aa).

4 helical membrane-spanning segments follow: residues 1–21 (MLAF…VAFI), 135–155 (LPRF…IAAL), 193–213 (AIAA…AILA), and 472–492 (LLVN…PLVG).

Its subcellular location is the cell membrane. This is an uncharacterized protein from Mycobacterium bovis (strain ATCC BAA-935 / AF2122/97).